A 372-amino-acid chain; its full sequence is Alanine racemase (372 aa).

The active-site Proton acceptor; specific for D-alanine is the Lys36. Lys36 carries the post-translational modification N6-(pyridoxal phosphate)lysine. Residue Arg134 coordinates substrate. Residue Tyr266 is the Proton acceptor; specific for L-alanine of the active site. A substrate-binding site is contributed by Met314.

The protein belongs to the alanine racemase family. Requires pyridoxal 5'-phosphate as cofactor.

The catalysed reaction is L-alanine = D-alanine. It participates in amino-acid biosynthesis; D-alanine biosynthesis; D-alanine from L-alanine: step 1/1. Catalyzes the interconversion of L-alanine and D-alanine. May also act on other amino acids. In Nitratidesulfovibrio vulgaris (strain DSM 19637 / Miyazaki F) (Desulfovibrio vulgaris), this protein is Alanine racemase (alr).